The primary structure comprises 391 residues: GTPase Obg (391 aa).

An Obg domain is found at 1 to 159; that stretch reads MKFVDEASIL…RDLLLELMLL (159 aa). The interval 127–147 is disordered; it reads NTRFKSSVNRTPRQKTNGTPG. Positions 129–145 are enriched in polar residues; sequence RFKSSVNRTPRQKTNGT. Positions 160 to 333 constitute an OBG-type G domain; that stretch reads ADVGMLGMPN…LCWDVMTFII (174 aa). Residues 166 to 173, 191 to 195, 213 to 216, 283 to 286, and 314 to 316 each bind GTP; these read GMPNAGKS, FTTLV, DIPG, NKID, and SAA. Positions 173 and 193 each coordinate Mg(2+).

This sequence belongs to the TRAFAC class OBG-HflX-like GTPase superfamily. OBG GTPase family. Monomer. Requires Mg(2+) as cofactor.

Its subcellular location is the cytoplasm. In terms of biological role, an essential GTPase which binds GTP, GDP and possibly (p)ppGpp with moderate affinity, with high nucleotide exchange rates and a fairly low GTP hydrolysis rate. Plays a role in control of the cell cycle, stress response, ribosome biogenesis and in those bacteria that undergo differentiation, in morphogenesis control. The chain is GTPase Obg from Salmonella arizonae (strain ATCC BAA-731 / CDC346-86 / RSK2980).